Consider the following 177-residue polypeptide: ATP synthase subunit delta (177 aa).

The protein belongs to the ATPase delta chain family. In terms of assembly, F-type ATPases have 2 components, F(1) - the catalytic core - and F(0) - the membrane proton channel. F(1) has five subunits: alpha(3), beta(3), gamma(1), delta(1), epsilon(1). F(0) has three main subunits: a(1), b(2) and c(10-14). The alpha and beta chains form an alternating ring which encloses part of the gamma chain. F(1) is attached to F(0) by a central stalk formed by the gamma and epsilon chains, while a peripheral stalk is formed by the delta and b chains.

It localises to the cell inner membrane. Its function is as follows. F(1)F(0) ATP synthase produces ATP from ADP in the presence of a proton or sodium gradient. F-type ATPases consist of two structural domains, F(1) containing the extramembraneous catalytic core and F(0) containing the membrane proton channel, linked together by a central stalk and a peripheral stalk. During catalysis, ATP synthesis in the catalytic domain of F(1) is coupled via a rotary mechanism of the central stalk subunits to proton translocation. In terms of biological role, this protein is part of the stalk that links CF(0) to CF(1). It either transmits conformational changes from CF(0) to CF(1) or is implicated in proton conduction. The protein is ATP synthase subunit delta of Sodalis glossinidius (strain morsitans).